Consider the following 485-residue polypeptide: Probable glycine dehydrogenase (decarboxylating) subunit 2 (485 aa).

K273 carries the N6-(pyridoxal phosphate)lysine modification.

It belongs to the GcvP family. C-terminal subunit subfamily. As to quaternary structure, the glycine cleavage system is composed of four proteins: P, T, L and H. In this organism, the P 'protein' is a heterodimer of two subunits. Requires pyridoxal 5'-phosphate as cofactor.

The enzyme catalyses N(6)-[(R)-lipoyl]-L-lysyl-[glycine-cleavage complex H protein] + glycine + H(+) = N(6)-[(R)-S(8)-aminomethyldihydrolipoyl]-L-lysyl-[glycine-cleavage complex H protein] + CO2. Functionally, the glycine cleavage system catalyzes the degradation of glycine. The P protein binds the alpha-amino group of glycine through its pyridoxal phosphate cofactor; CO(2) is released and the remaining methylamine moiety is then transferred to the lipoamide cofactor of the H protein. The polypeptide is Probable glycine dehydrogenase (decarboxylating) subunit 2 (Caldanaerobacter subterraneus subsp. tengcongensis (strain DSM 15242 / JCM 11007 / NBRC 100824 / MB4) (Thermoanaerobacter tengcongensis)).